We begin with the raw amino-acid sequence, 274 residues long: Dermonecrotic toxin SdSicTox-betaIIB2i (274 aa).

His5 is a catalytic residue. Residues Glu25 and Asp27 each coordinate Mg(2+). His41 (nucleophile) is an active-site residue. Disulfide bonds link Cys45/Cys51 and Cys47/Cys190. Asp85 serves as a coordination point for Mg(2+).

It belongs to the arthropod phospholipase D family. Class II subfamily. Mg(2+) serves as cofactor. Expressed by the venom gland.

Its subcellular location is the secreted. It carries out the reaction an N-(acyl)-sphingosylphosphocholine = an N-(acyl)-sphingosyl-1,3-cyclic phosphate + choline. It catalyses the reaction an N-(acyl)-sphingosylphosphoethanolamine = an N-(acyl)-sphingosyl-1,3-cyclic phosphate + ethanolamine. The catalysed reaction is a 1-acyl-sn-glycero-3-phosphocholine = a 1-acyl-sn-glycero-2,3-cyclic phosphate + choline. The enzyme catalyses a 1-acyl-sn-glycero-3-phosphoethanolamine = a 1-acyl-sn-glycero-2,3-cyclic phosphate + ethanolamine. Its function is as follows. Dermonecrotic toxins cleave the phosphodiester linkage between the phosphate and headgroup of certain phospholipids (sphingolipid and lysolipid substrates), forming an alcohol (often choline) and a cyclic phosphate. This toxin acts on sphingomyelin (SM). It may also act on ceramide phosphoethanolamine (CPE), lysophosphatidylcholine (LPC) and lysophosphatidylethanolamine (LPE), but not on lysophosphatidylserine (LPS), and lysophosphatidylglycerol (LPG). It acts by transphosphatidylation, releasing exclusively cyclic phosphate products as second products. Induces dermonecrosis, hemolysis, increased vascular permeability, edema, inflammatory response, and platelet aggregation. The sequence is that of Dermonecrotic toxin SdSicTox-betaIIB2i from Sicarius cf. damarensis (strain GJB-2008) (Six-eyed sand spider).